A 297-amino-acid chain; its full sequence is MRSRTYHDQSVCGPYGSQRTDCDRDTDAGSDTDVHGAQVATQIRTDTLLHSSLWVNIALAGLSILVFLYMARTVRANRARLIVGATLMIPLVSLSSYLGLVTGLTAGPIEMPAAHALAGEDVLSQWGRYLTWTLSTPMILLALGWLAEVDTADLFVVIAADIGMCLTGLAAALTTSSYAFRWAFYLVSTAFFVVVLYALLAKWPTNAEAAGTGDIFGTLRWLTVILWLGYPILWALGVEGFALVDSVGLTSWGYSLLDIGAKYLFAALLLRWVANNERTIAVGQRSGRGAIGDPVED.

Positions 1–31 (MRSRTYHDQSVCGPYGSQRTDCDRDTDAGSD) are disordered. Residues 1-45 (MRSRTYHDQSVCGPYGSQRTDCDRDTDAGSDTDVHGAQVATQIRT) lie on the Extracellular side of the membrane. A helical membrane pass occupies residues 46–71 (DTLLHSSLWVNIALAGLSILVFLYMA). At 72-77 (RTVRAN) the chain is on the cytoplasmic side. A helical transmembrane segment spans residues 78 to 101 (RARLIVGATLMIPLVSLSSYLGLV). The Extracellular segment spans residues 102-125 (TGLTAGPIEMPAAHALAGEDVLSQ). A helical membrane pass occupies residues 126-147 (WGRYLTWTLSTPMILLALGWLA). Residues 148–150 (EVD) lie on the Cytoplasmic side of the membrane. The helical transmembrane segment at 151–174 (TADLFVVIAADIGMCLTGLAAALT) threads the bilayer. At 175-177 (TSS) the chain is on the extracellular side. Residues 178 to 200 (YAFRWAFYLVSTAFFVVVLYALL) traverse the membrane as a helical segment. Residues 201-212 (AKWPTNAEAAGT) are Cytoplasmic-facing. The helical transmembrane segment at 213–236 (GDIFGTLRWLTVILWLGYPILWAL) threads the bilayer. Residues 237–246 (GVEGFALVDS) lie on the Extracellular side of the membrane. The chain crosses the membrane as a helical span at residues 247–275 (VGLTSWGYSLLDIGAKYLFAALLLRWVAN). Lys262 carries the post-translational modification N6-(retinylidene)lysine. The Cytoplasmic portion of the chain corresponds to 276–297 (NERTIAVGQRSGRGAIGDPVED).

It belongs to the archaeal/bacterial/fungal opsin family.

It localises to the cell membrane. Light-driven chloride pump. This Haloterrigena sp. (strain arg-4) protein is Halorhodopsin (hop).